The sequence spans 185 residues: Ribosome-recycling factor (185 aa).

It belongs to the RRF family.

It is found in the cytoplasm. Responsible for the release of ribosomes from messenger RNA at the termination of protein biosynthesis. May increase the efficiency of translation by recycling ribosomes from one round of translation to another. The sequence is that of Ribosome-recycling factor from Streptococcus pyogenes serotype M28 (strain MGAS6180).